The sequence spans 363 residues: MSDISPDYPTLQSIGWPWPGPPEEAAWKAVFAAHPQALPARVVEQHRTGYVVADTPEASLKAESLPEWQRPRFPSHERAAVGDWVLMEGKRIVALLPRRTSIKRGAAGAHYHQQVIAANIDTVFIVCGLDADFNPRRIERYLLLVGGGGAQPVVVLTKADQTEHAEDALAVLEELEAQNIPLRALNAKDPASVAALRPWLGDGRTAVLVGSSGAGKSTLTNTLLGTEKMKTNGVRENDSRGRHTTTHRALIPLPSGACLIDTPGMRELKPTGEEDLAEGGFSDVEALAAQCRFNDCAHIAEPGCAVRAAIEADLLDPERVANYMKLRVEVASAAEKLATRVAQNNRGKGSGKRPASIDRPGRR.

Positions His-112–Leu-268 constitute a CP-type G domain. Residues Thr-157–Asp-160 and Gly-210–Thr-218 contribute to the GTP site. Residues Cys-291, Cys-296, His-298, and Cys-304 each contribute to the Zn(2+) site. The disordered stretch occupies residues Arg-340–Arg-363.

Belongs to the TRAFAC class YlqF/YawG GTPase family. RsgA subfamily. In terms of assembly, monomer. Associates with 30S ribosomal subunit, binds 16S rRNA. Zn(2+) serves as cofactor.

It is found in the cytoplasm. Its function is as follows. One of several proteins that assist in the late maturation steps of the functional core of the 30S ribosomal subunit. Helps release RbfA from mature subunits. May play a role in the assembly of ribosomal proteins into the subunit. Circularly permuted GTPase that catalyzes slow GTP hydrolysis, GTPase activity is stimulated by the 30S ribosomal subunit. This Xanthomonas oryzae pv. oryzae (strain PXO99A) protein is Small ribosomal subunit biogenesis GTPase RsgA.